A 678-amino-acid polypeptide reads, in one-letter code: Inositol-trisphosphate 3-kinase C (678 aa).

Disordered stretches follow at residues 26–128 (LEAL…RRNS) and 151–300 (DLQS…LDLS). Gly residues predominate over residues 44-58 (PGAGGPTGRPEGGGP). Basic and acidic residues-rich tracts occupy residues 61–76 (WIEE…RTDL) and 107–116 (EKPRQNKELD). Phosphoserine is present on Ser-160. Basic and acidic residues-rich tracts occupy residues 173–196 (ELDR…DNLR) and 220–236 (SGKE…HDTD). The Nuclear export signal signature appears at 318-326 (LCPVPRLII). A disordered region spans residues 328–380 (PETPEPEAQPVGPQSRIEGGTGGFSSASSFDESEDDLVAGGGGTSDPEDRAGS). Position 330 is a phosphothreonine (Thr-330). Ser-398 is subject to Phosphoserine. ATP-binding positions include Lys-426, 466–468 (EDL), and Asp-479. Substrate-binding positions include Lys-481, 502–508 (RKDMYEK), and 529–536 (KPRYMQWR). The calmodulin-binding stretch occupies residues 504–512 (DMYEKMVAV). 2 residues coordinate ATP: Lys-553 and Asp-633. Lys-636 provides a ligand contact to substrate.

It belongs to the inositol phosphokinase (IPK) family.

It is found in the nucleus. It localises to the cytoplasm. The enzyme catalyses 1D-myo-inositol 1,4,5-trisphosphate + ATP = 1D-myo-inositol 1,3,4,5-tetrakisphosphate + ADP + H(+). With respect to regulation, activated by calcium/calmodulin. Inhibited by high concentrations of the substrate Ins(1,2,4)P3, and allosterically activated by the product Ins(1,3,4,5)P4. Its function is as follows. Catalyzes the phosphorylation of 1D-myo-inositol 1,4,5-trisphosphate (InsP3) into 1D-myo-inositol 1,3,4,5-tetrakisphosphate and participates to the regulation of calcium homeostasis. Can phosphorylate inositol 2,4,5-triphosphate to inositol 2,4,5,6-tetraphosphate. The protein is Inositol-trisphosphate 3-kinase C (Itpkc) of Mus musculus (Mouse).